Consider the following 456-residue polypeptide: ATP synthase subunit beta 1 (456 aa).

Gly-152–Ser-159 provides a ligand contact to ATP.

The protein belongs to the ATPase alpha/beta chains family. F-type ATPases have 2 components, CF(1) - the catalytic core - and CF(0) - the membrane proton channel. CF(1) has five subunits: alpha(3), beta(3), gamma(1), delta(1), epsilon(1). CF(0) has three main subunits: a(1), b(2) and c(9-12). The alpha and beta chains form an alternating ring which encloses part of the gamma chain. CF(1) is attached to CF(0) by a central stalk formed by the gamma and epsilon chains, while a peripheral stalk is formed by the delta and b chains.

The protein localises to the cell membrane. The enzyme catalyses ATP + H2O + 4 H(+)(in) = ADP + phosphate + 5 H(+)(out). Functionally, produces ATP from ADP in the presence of a proton gradient across the membrane. The catalytic sites are hosted primarily by the beta subunits. The protein is ATP synthase subunit beta 1 of Listeria welshimeri serovar 6b (strain ATCC 35897 / DSM 20650 / CCUG 15529 / CIP 8149 / NCTC 11857 / SLCC 5334 / V8).